Here is a 223-residue protein sequence, read N- to C-terminus: Urease accessory protein UreF (223 aa).

This sequence belongs to the UreF family. UreD, UreF and UreG form a complex that acts as a GTP-hydrolysis-dependent molecular chaperone, activating the urease apoprotein by helping to assemble the nickel containing metallocenter of UreC. The UreE protein probably delivers the nickel.

The protein localises to the cytoplasm. In terms of biological role, required for maturation of urease via the functional incorporation of the urease nickel metallocenter. The chain is Urease accessory protein UreF from Rhizobium etli (strain ATCC 51251 / DSM 11541 / JCM 21823 / NBRC 15573 / CFN 42).